We begin with the raw amino-acid sequence, 132 residues long: Small ribosomal subunit protein uS8 (132 aa).

The protein belongs to the universal ribosomal protein uS8 family. Part of the 30S ribosomal subunit. Contacts proteins S5 and S12.

Functionally, one of the primary rRNA binding proteins, it binds directly to 16S rRNA central domain where it helps coordinate assembly of the platform of the 30S subunit. This is Small ribosomal subunit protein uS8 from Ehrlichia canis (strain Jake).